We begin with the raw amino-acid sequence, 642 residues long: Threonine--tRNA ligase (642 aa).

The TGS domain maps to 1-61 (MPVITLPDGS…DADATVAIIT (61 aa)). The interval 243 to 534 (DHRKIGKQLD…LTEEFAGFFP (292 aa)) is catalytic. Residues Cys334, His385, and His511 each contribute to the Zn(2+) site.

This sequence belongs to the class-II aminoacyl-tRNA synthetase family. In terms of assembly, homodimer. Requires Zn(2+) as cofactor.

The protein localises to the cytoplasm. It carries out the reaction tRNA(Thr) + L-threonine + ATP = L-threonyl-tRNA(Thr) + AMP + diphosphate + H(+). Catalyzes the attachment of threonine to tRNA(Thr) in a two-step reaction: L-threonine is first activated by ATP to form Thr-AMP and then transferred to the acceptor end of tRNA(Thr). Also edits incorrectly charged L-seryl-tRNA(Thr). In Edwardsiella ictaluri (strain 93-146), this protein is Threonine--tRNA ligase.